A 452-amino-acid polypeptide reads, in one-letter code: Maltoporin (452 aa).

Positions 1-25 (MMITLRKLPLAVAVAAGVMSAQAMA) are cleaved as a signal peptide.

The protein belongs to the porin LamB (TC 1.B.3) family. As to quaternary structure, homotrimer formed of three 18-stranded antiparallel beta-barrels, containing three independent channels.

The protein localises to the cell outer membrane. It catalyses the reaction beta-maltose(in) = beta-maltose(out). Its function is as follows. Involved in the transport of maltose and maltodextrins. This Salmonella paratyphi A (strain ATCC 9150 / SARB42) protein is Maltoporin.